Consider the following 192-residue polypeptide: Ribose 1,5-bisphosphate phosphokinase PhnN (192 aa).

An ATP-binding site is contributed by 15 to 22; that stretch reads GPSGAGKD.

It belongs to the ribose 1,5-bisphosphokinase family.

The catalysed reaction is alpha-D-ribose 1,5-bisphosphate + ATP = 5-phospho-alpha-D-ribose 1-diphosphate + ADP. It functions in the pathway metabolic intermediate biosynthesis; 5-phospho-alpha-D-ribose 1-diphosphate biosynthesis; 5-phospho-alpha-D-ribose 1-diphosphate from D-ribose 5-phosphate (route II): step 3/3. Its function is as follows. Catalyzes the phosphorylation of ribose 1,5-bisphosphate to 5-phospho-D-ribosyl alpha-1-diphosphate (PRPP). The polypeptide is Ribose 1,5-bisphosphate phosphokinase PhnN (Brucella abortus biovar 1 (strain 9-941)).